A 168-amino-acid polypeptide reads, in one-letter code: Peptide deformylase (168 aa).

Fe cation-binding residues include cysteine 92 and histidine 134. Residue glutamate 135 is part of the active site. Histidine 138 contacts Fe cation.

This sequence belongs to the polypeptide deformylase family. Requires Fe(2+) as cofactor.

The enzyme catalyses N-terminal N-formyl-L-methionyl-[peptide] + H2O = N-terminal L-methionyl-[peptide] + formate. Removes the formyl group from the N-terminal Met of newly synthesized proteins. Requires at least a dipeptide for an efficient rate of reaction. N-terminal L-methionine is a prerequisite for activity but the enzyme has broad specificity at other positions. In Hahella chejuensis (strain KCTC 2396), this protein is Peptide deformylase.